A 118-amino-acid polypeptide reads, in one-letter code: Small ribosomal subunit protein uS13 (118 aa).

The segment at 97–118 is disordered; the sequence is VRGQRTKTNARTCKGPRKAIKK.

Belongs to the universal ribosomal protein uS13 family. Part of the 30S ribosomal subunit. Forms a loose heterodimer with protein S19. Forms two bridges to the 50S subunit in the 70S ribosome.

In terms of biological role, located at the top of the head of the 30S subunit, it contacts several helices of the 16S rRNA. In the 70S ribosome it contacts the 23S rRNA (bridge B1a) and protein L5 of the 50S subunit (bridge B1b), connecting the 2 subunits; these bridges are implicated in subunit movement. Contacts the tRNAs in the A and P-sites. The polypeptide is Small ribosomal subunit protein uS13 (Buchnera aphidicola subsp. Schizaphis graminum (strain Sg)).